We begin with the raw amino-acid sequence, 692 residues long: Elongation factor G (692 aa).

Residues 8-282 (EKTRNIGIMA…AIVDYLPAPT (275 aa)) enclose the tr-type G domain. GTP is bound by residues 17–24 (AHIDAGKT), 81–85 (DTPGH), and 135–138 (NKMD).

Belongs to the TRAFAC class translation factor GTPase superfamily. Classic translation factor GTPase family. EF-G/EF-2 subfamily.

It is found in the cytoplasm. Its function is as follows. Catalyzes the GTP-dependent ribosomal translocation step during translation elongation. During this step, the ribosome changes from the pre-translocational (PRE) to the post-translocational (POST) state as the newly formed A-site-bound peptidyl-tRNA and P-site-bound deacylated tRNA move to the P and E sites, respectively. Catalyzes the coordinated movement of the two tRNA molecules, the mRNA and conformational changes in the ribosome. This Pelotomaculum thermopropionicum (strain DSM 13744 / JCM 10971 / SI) protein is Elongation factor G.